An 897-amino-acid chain; its full sequence is Alpha-actinin-2 (897 aa).

The tract at residues 1–257 (MNSMNQIETN…IMTYVSCFYH (257 aa)) is actin-binding. Calponin-homology (CH) domains lie at 41–145 (KQQR…LRFA) and 154–260 (TSAK…HAFA). Spectrin repeat units lie at residues 284–394 (RLME…WLLN), 404–509 (HLAE…ALER), 519–630 (QLHL…SLQE), and 640–743 (RLRR…EVET). 2 consecutive EF-hand domains span residues 756–791 (EQMN…MGYD) and 792–827 (LGEA…ETAD). Ca(2+) contacts are provided by aspartate 769, asparagine 773, aspartate 780, aspartate 805, asparagine 807, and threonine 811.

It belongs to the alpha-actinin family. As to quaternary structure, homodimer; antiparallel. In terms of processing, ubiquitinated by FBXL22, leading to proteasomal degradation.

It is found in the cytoplasm. The protein resides in the myofibril. It localises to the sarcomere. Its subcellular location is the z line. In terms of biological role, F-actin cross-linking protein which is thought to anchor actin to a variety of intracellular structures. This is a bundling protein. This is Alpha-actinin-2 (ACTN2) from Gallus gallus (Chicken).